Here is a 447-residue protein sequence, read N- to C-terminus: NADH peroxidase (447 aa).

FAD-binding positions include 7 to 11, Glu32, Cys42, 110 to 113, and Arg132; these read GSSHG and SPGA. His10 (proton acceptor) is an active-site residue. Cys42 acts as the Redox-active in catalysis. Cys42 carries the post-translational modification Cysteine sulfenic acid (-SOH). Ile160, Asp179, Tyr188, and Gly243 together coordinate NAD(+). An FAD-binding site is contributed by Asp281. An NAD(+)-binding site is contributed by Ala297. Ala299 contributes to the FAD binding site. Residue Gly328 participates in NAD(+) binding.

This sequence belongs to the class-III pyridine nucleotide-disulfide oxidoreductase family. In terms of assembly, homotetramer. FAD serves as cofactor.

The catalysed reaction is H2O2 + NADH + H(+) = NAD(+) + 2 H2O. Its function is as follows. Peroxidase whose active site is a redox-active cysteine-sulfenic acid. The chain is NADH peroxidase (npr) from Enterococcus faecalis (strain ATCC 700802 / V583).